The primary structure comprises 900 residues: DNA mismatch repair protein MutS (900 aa).

Residue 637–644 participates in ATP binding; the sequence is GPNMAGKS.

It belongs to the DNA mismatch repair MutS family.

This protein is involved in the repair of mismatches in DNA. It is possible that it carries out the mismatch recognition step. This protein has a weak ATPase activity. In Methanosarcina barkeri (strain Fusaro / DSM 804), this protein is DNA mismatch repair protein MutS.